The chain runs to 937 residues: Isoleucine--tRNA ligase (937 aa).

The 'HIGH' region motif lies at 58 to 68; the sequence is PYANGSIHIGH. Glu561 is an L-isoleucyl-5'-AMP binding site. The 'KMSKS' region signature appears at 602–606; sequence KMSKS. Lys605 provides a ligand contact to ATP. Zn(2+) is bound by residues Cys900, Cys903, Cys920, and Cys923.

It belongs to the class-I aminoacyl-tRNA synthetase family. IleS type 1 subfamily. Monomer. The cofactor is Zn(2+).

Its subcellular location is the cytoplasm. The enzyme catalyses tRNA(Ile) + L-isoleucine + ATP = L-isoleucyl-tRNA(Ile) + AMP + diphosphate. Functionally, catalyzes the attachment of isoleucine to tRNA(Ile). As IleRS can inadvertently accommodate and process structurally similar amino acids such as valine, to avoid such errors it has two additional distinct tRNA(Ile)-dependent editing activities. One activity is designated as 'pretransfer' editing and involves the hydrolysis of activated Val-AMP. The other activity is designated 'posttransfer' editing and involves deacylation of mischarged Val-tRNA(Ile). This is Isoleucine--tRNA ligase from Pectobacterium carotovorum subsp. carotovorum (strain PC1).